A 359-amino-acid polypeptide reads, in one-letter code: 3-dehydroquinate synthase (359 aa).

NAD(+) is bound by residues 69–74, 103–107, 127–128, lysine 140, lysine 149, and 167–170; these read DGEQHK, GVIGD, TT, and TLDT. Zn(2+) contacts are provided by glutamate 182, histidine 245, and histidine 262.

Belongs to the sugar phosphate cyclases superfamily. Dehydroquinate synthase family. It depends on Co(2+) as a cofactor. Zn(2+) serves as cofactor. NAD(+) is required as a cofactor.

The protein resides in the cytoplasm. It catalyses the reaction 7-phospho-2-dehydro-3-deoxy-D-arabino-heptonate = 3-dehydroquinate + phosphate. The protein operates within metabolic intermediate biosynthesis; chorismate biosynthesis; chorismate from D-erythrose 4-phosphate and phosphoenolpyruvate: step 2/7. Its function is as follows. Catalyzes the conversion of 3-deoxy-D-arabino-heptulosonate 7-phosphate (DAHP) to dehydroquinate (DHQ). This is 3-dehydroquinate synthase from Nitrosococcus oceani (strain ATCC 19707 / BCRC 17464 / JCM 30415 / NCIMB 11848 / C-107).